We begin with the raw amino-acid sequence, 136 residues long: Gonadotropin subunit beta-2 (136 aa).

The N-terminal stretch at 1–21 (MVCLFLGASSFIWSLAPAAAA) is a signal peptide. 6 disulfides stabilise this stretch: C27-C75, C41-C90, C44-C128, C52-C106, C56-C108, and C111-C118. N-linked (GlcNAc...) asparagine glycosylation occurs at N31.

The protein belongs to the glycoprotein hormones subunit beta family. In terms of assembly, heterodimer of an alpha and a beta chain.

The protein resides in the secreted. Involved in gametogenesis and steroidogenesis. The polypeptide is Gonadotropin subunit beta-2 (cgbb) (Fundulus heteroclitus (Killifish)).